The sequence spans 397 residues: S-layer protein B (397 aa).

The first 24 residues, 1-24 (MVVKKTFVLSTLILISVVALVSTA), serve as a signal peptide directing secretion. Residues 259-314 (INALNNEVSTLRSEISSLNSTIASLNKSLANANTQISNLQSEITTLNSEIGKLNST) are a coiled coil. A helical transmembrane segment spans residues 373 to 393 (GGIIAGIIGLIVAIVAIVLVM).

It belongs to the Sulfolobales SlaB family. The mushroom-shaped unit cells of the Sulfolobales' S-layers may consist of three SlaB subunits and six SlaA subunits.

It localises to the secreted. Its subcellular location is the cell wall. The protein resides in the S-layer. The protein localises to the cell membrane. S-layer small protein. May anchor the complex to the cell membrane. This chain is S-layer protein B, found in Saccharolobus solfataricus (strain ATCC 35092 / DSM 1617 / JCM 11322 / P2) (Sulfolobus solfataricus).